A 76-amino-acid polypeptide reads, in one-letter code: Sec-independent protein translocase protein TatA (76 aa).

The chain crosses the membrane as a helical span at residues Met-1 to Phe-21. Over residues Val-44–Glu-57 the composition is skewed to basic and acidic residues. Residues Val-44–Lys-76 form a disordered region. The span at Ala-62–Lys-76 shows a compositional bias: polar residues.

The protein belongs to the TatA/E family. As to quaternary structure, the Tat system comprises two distinct complexes: a TatABC complex, containing multiple copies of TatA, TatB and TatC subunits, and a separate TatA complex, containing only TatA subunits. Substrates initially bind to the TatABC complex, which probably triggers association of the separate TatA complex to form the active translocon.

It localises to the cell membrane. Functionally, part of the twin-arginine translocation (Tat) system that transports large folded proteins containing a characteristic twin-arginine motif in their signal peptide across membranes. TatA could form the protein-conducting channel of the Tat system. This Leifsonia xyli subsp. xyli (strain CTCB07) protein is Sec-independent protein translocase protein TatA.